Here is a 249-residue protein sequence, read N- to C-terminus: Type III pantothenate kinase (249 aa).

An ATP-binding site is contributed by 6-13 (DCGNSLIK). Substrate-binding positions include Y93 and 100–103 (GLDR). The active-site Proton acceptor is the D102. Residue D122 coordinates K(+). T125 lines the ATP pocket. Residue T181 coordinates substrate.

This sequence belongs to the type III pantothenate kinase family. Homodimer. NH4(+) serves as cofactor. Requires K(+) as cofactor.

It is found in the cytoplasm. The enzyme catalyses (R)-pantothenate + ATP = (R)-4'-phosphopantothenate + ADP + H(+). It participates in cofactor biosynthesis; coenzyme A biosynthesis; CoA from (R)-pantothenate: step 1/5. Functionally, catalyzes the phosphorylation of pantothenate (Pan), the first step in CoA biosynthesis. The protein is Type III pantothenate kinase of Pseudomonas paraeruginosa (strain DSM 24068 / PA7) (Pseudomonas aeruginosa (strain PA7)).